Here is a 414-residue protein sequence, read N- to C-terminus: Multifunctional CCA protein (414 aa).

ATP is bound by residues Gly8 and Arg11. CTP-binding residues include Gly8 and Arg11. Residues Asp21 and Asp23 each coordinate Mg(2+). Positions 91, 143, and 146 each coordinate ATP. Positions 91, 143, and 146 each coordinate CTP. Positions 232 to 333 constitute an HD domain; that stretch reads TGVHVMMVID…TRLVERCDAL (102 aa).

Belongs to the tRNA nucleotidyltransferase/poly(A) polymerase family. Bacterial CCA-adding enzyme type 1 subfamily. As to quaternary structure, monomer. Can also form homodimers and oligomers. Mg(2+) is required as a cofactor. It depends on Ni(2+) as a cofactor.

It carries out the reaction a tRNA precursor + 2 CTP + ATP = a tRNA with a 3' CCA end + 3 diphosphate. The catalysed reaction is a tRNA with a 3' CCA end + 2 CTP + ATP = a tRNA with a 3' CCACCA end + 3 diphosphate. In terms of biological role, catalyzes the addition and repair of the essential 3'-terminal CCA sequence in tRNAs without using a nucleic acid template. Adds these three nucleotides in the order of C, C, and A to the tRNA nucleotide-73, using CTP and ATP as substrates and producing inorganic pyrophosphate. tRNA 3'-terminal CCA addition is required both for tRNA processing and repair. Also involved in tRNA surveillance by mediating tandem CCA addition to generate a CCACCA at the 3' terminus of unstable tRNAs. While stable tRNAs receive only 3'-terminal CCA, unstable tRNAs are marked with CCACCA and rapidly degraded. In Cupriavidus metallidurans (strain ATCC 43123 / DSM 2839 / NBRC 102507 / CH34) (Ralstonia metallidurans), this protein is Multifunctional CCA protein.